The following is a 167-amino-acid chain: Lipoprotein signal peptidase (167 aa).

Helical transmembrane passes span 67-87 and 91-111; these read WILV…LWRA and LVAL…IDRI. Residues Asp-118 and Asp-136 contribute to the active site. A helical membrane pass occupies residues 127-147; the sequence is FSWYVFNLADAAIVAGVALLI.

The protein belongs to the peptidase A8 family.

Its subcellular location is the cell inner membrane. The enzyme catalyses Release of signal peptides from bacterial membrane prolipoproteins. Hydrolyzes -Xaa-Yaa-Zaa-|-(S,diacylglyceryl)Cys-, in which Xaa is hydrophobic (preferably Leu), and Yaa (Ala or Ser) and Zaa (Gly or Ala) have small, neutral side chains.. It participates in protein modification; lipoprotein biosynthesis (signal peptide cleavage). This protein specifically catalyzes the removal of signal peptides from prolipoproteins. The sequence is that of Lipoprotein signal peptidase from Beijerinckia indica subsp. indica (strain ATCC 9039 / DSM 1715 / NCIMB 8712).